Reading from the N-terminus, the 488-residue chain is MAGALCVTLLLLLSTNTVSGRKTWRRRGQQIVPSGRERSEGGDESFPLDFTAVEGNMDNFMAQIKSLAQSLYPCSAQRLDDEMKLHILHNKSVTCNDGSSAGYYLKESKGSRRWLVFLEGGWYCISHENCDLRYDTMRRLMSSKAWPPAKTASGILSTQPEENPHWWNANMVFIPYCSSDVWSGASPKTEKSGYAFMGSLIIQEVVKELLGKGLDAAKVLLLAGSSAGGTGVLLNVDLVADLLEELGYPGIQVRGLSDSGWFLDNKQYRRTDCTDIITCAPTEAIQRGIRYWSSMVPERCKQQFKEGEEWNCFFGYKIYPTLRSPVFVVQWLFDEAQLTVDNVHLSGQPVQESQWLYIQNLGRELRNTLKDVGASFAPACLAHEVITRSHWTEIQVRGTSLPRALHCWDRRLQETNKNSKVPLKGCPFHLMDSCPWPQCNPTCPSIRDHFTGQEMSVVQFLMHLGFDVQKMASQQGMEPGKLLGVLSS.

The first 20 residues, 1-20 (MAGALCVTLLLLLSTNTVSG), serve as a signal peptide directing secretion. Residue Asn-90 is glycosylated (N-linked (GlcNAc...) asparagine). Active-site charge relay system residues include Ser-226, Asp-334, and His-383.

The protein belongs to the pectinacetylesterase family. Notum subfamily. Expressed in the egg and through cleavage to gastrulation stages. Enriched in the animal (prospective ectoderm) and dorsal regions in early gastrula. Shows a dynamic expression during embryogenesis, in particular during neural induction and antero-posterior (AP) patterning.

It is found in the secreted. The enzyme catalyses [Wnt protein]-O-(9Z)-hexadecenoyl-L-serine + H2O = [Wnt protein]-L-serine + (9Z)-hexadecenoate + H(+). Its function is as follows. Carboxylesterase that acts as a key negative regulator of the Wnt signaling pathway by specifically mediating depalmitoleoylation of WNT proteins. Serine palmitoleoylation of WNT proteins is required for efficient binding to frizzled receptors. Functions in the prospective ectoderm and is required for neural induction. The sequence is that of Palmitoleoyl-protein carboxylesterase notum1 from Xenopus laevis (African clawed frog).